The sequence spans 208 residues: Thymidylate kinase (208 aa).

10-17 (GPDGSGKT) serves as a coordination point for ATP.

The protein belongs to the thymidylate kinase family.

The enzyme catalyses dTMP + ATP = dTDP + ADP. Functionally, phosphorylation of dTMP to form dTDP in both de novo and salvage pathways of dTTP synthesis. The sequence is that of Thymidylate kinase from Listeria monocytogenes serotype 4a (strain HCC23).